Reading from the N-terminus, the 290-residue chain is Triplex capsid protein 1 (290 aa).

Belongs to the herpesviridae TRX1 protein family. In terms of assembly, interacts with TRX2, MCP and capsid vertex component 2/CVC2.

It localises to the virion. The protein localises to the host nucleus. In terms of biological role, structural component of the T=16 icosahedral capsid. The capsid is composed of pentamers and hexamers of major capsid protein/MCP, which are linked together by heterotrimers called triplexes. These triplexes are formed by a single molecule of triplex protein 1/TRX1 and two copies of triplex protein 2/TRX2. Additionally, TRX1 is required for efficient transport of TRX2 to the nucleus, which is the site of capsid assembly. The chain is Triplex capsid protein 1 from Human cytomegalovirus (strain AD169) (HHV-5).